The following is a 344-amino-acid chain: D-amino-acid oxidase (344 aa).

6 residues coordinate FAD: A11, S14, S49, G53, N55, and I167. The (R)-lactate site is built by Y229 and R290. Positions 229 and 290 each coordinate anthranilate. Positions 290, 321, 324, 325, and 326 each coordinate FAD.

Belongs to the DAMOX/DASOX family. FAD serves as cofactor.

Its subcellular location is the peroxisome. The enzyme catalyses a D-alpha-amino acid + O2 + H2O = a 2-oxocarboxylate + H2O2 + NH4(+). It carries out the reaction D-alanine + O2 + H2O = pyruvate + H2O2 + NH4(+). Its function is as follows. Catalyzes the oxidative deamination of D-amino acids with broad substrate specificity. Enables the organism to utilize D-amino acids as a source of nutrients. Enables the organism to utilize D-alanine as a source of nitrogen. This Komagataella phaffii (strain GS115 / ATCC 20864) (Yeast) protein is D-amino-acid oxidase.